The following is an 897-amino-acid chain: Chromodomain-helicase-DNA-binding protein 1-like (897 aa).

At Arg-9 the chain carries Omega-N-methylarginine. One can recognise a Helicase ATP-binding domain in the interval Ala-58 to Asp-223. An ATP-binding site is contributed by Asp-71–Thr-78. The DEAH box signature appears at Asp-174 to His-177. The 163-residue stretch at Leu-351 to Gln-513 folds into the Helicase C-terminal domain. Ser-540, Ser-607, Ser-618, Ser-628, and Ser-636 each carry phosphoserine. The tract at residues Thr-601–Leu-635 is regulatory linker segment (RLS). The interval Asn-615–Lys-673 is required for ATPase activity. Disordered regions lie at residues Ser-628–Arg-654 and Leu-687–Asp-711. The stretch at Glu-638 to Ala-675 forms a coiled coil. The segment covering Asp-642–Arg-654 has biased composition (basic and acidic residues). Over residues Glu-690–Asp-711 the composition is skewed to acidic residues. Positions Ser-704 to Pro-897 constitute a Macro domain. The residue at position 891 (Ser-891) is a Phosphoserine.

This sequence belongs to the SNF2/RAD54 helicase family. Interacts with nucleosomes; interacts with the acidic patch of histones. Interacts (via macro domain) with PARP1; interacts only when PARP1 is poly-ADP-ribosylated (PARylated). Interacts with CIAO1. As to expression, frequently overexpressed in hepatomacellular carcinomas.

The protein resides in the nucleus. It is found in the chromosome. The catalysed reaction is ATP + H2O = ADP + phosphate + H(+). Its activity is regulated as follows. Adopts an inactive conformation in absence of DNA damage. Binding to poly-ADP-ribosylated histones activates the ATP-dependent chromatin remodeler activity. Functionally, ATP-dependent chromatin remodeler that mediates chromatin-remodeling following DNA damage. Recruited to DNA damage sites through interaction with poly-ADP-ribose: specifically recognizes and binds histones that are poly-ADP-ribosylated on serine residues in response to DNA damage. Poly-ADP-ribose-binding activates the ATP-dependent chromatin remodeler activity, thereby regulating chromatin during DNA repair. Catalyzes nucleosome sliding away from DNA breaks in an ATP-dependent manner. Chromatin remodeling activity promotes PARP2 removal from chromatin. The chain is Chromodomain-helicase-DNA-binding protein 1-like from Homo sapiens (Human).